We begin with the raw amino-acid sequence, 317 residues long: Protein lifeguard 2 (317 aa).

A disordered region spans residues 1-54; it reads MTQGKLSVANKAPGTEGQQHQANGEKKDAPAVPSAPPSYEEATSGEGLKAGTFP. 3 helical membrane-spanning segments follow: residues 107-127, 139-159, and 166-186; these read VYTI…LFTF, PGWY…LACC, and FPWN…LTGM. N-linked (GlcNAc...) asparagine glycosylation occurs at asparagine 192. 4 helical membrane passes run 195–215, 226–246, 252–272, and 291–311; these read SVLL…IFSF, GVLF…AVLL, PWLH…FLAF, and IFGA…FLQL.

This sequence belongs to the BI1 family. LFG subfamily. Interacts with FAS/TNFRSF6 and BAX. As to expression, brain. Highly expressed in cerebellum, also found in cortex, olfactory bulb, and hippocampus.

Its subcellular location is the cell membrane. The protein localises to the membrane raft. The protein resides in the postsynaptic cell membrane. Its function is as follows. Antiapoptotic protein which protects cells uniquely from Fas-induced apoptosis. Regulates Fas-mediated apoptosis in neurons by interfering with caspase-8 activation. Plays a role in cerebellar development by affecting cerebellar size, internal granular layer (IGL) thickness, and Purkinje cell (PC) development. The polypeptide is Protein lifeguard 2 (Faim2) (Mus musculus (Mouse)).